A 288-amino-acid polypeptide reads, in one-letter code: Shikimate dehydrogenase (NADP(+)) (288 aa).

Residues S15–S17 and T64 contribute to the shikimate site. The Proton acceptor role is filled by K68. E83 serves as a coordination point for NADP(+). Shikimate is bound by residues N92 and D117. NADP(+) contacts are provided by residues G141–A145, N165–K170, and M232. Y234 serves as a coordination point for shikimate. G254 serves as a coordination point for NADP(+).

This sequence belongs to the shikimate dehydrogenase family. In terms of assembly, homodimer.

It catalyses the reaction shikimate + NADP(+) = 3-dehydroshikimate + NADPH + H(+). It functions in the pathway metabolic intermediate biosynthesis; chorismate biosynthesis; chorismate from D-erythrose 4-phosphate and phosphoenolpyruvate: step 4/7. Its function is as follows. Involved in the biosynthesis of the chorismate, which leads to the biosynthesis of aromatic amino acids. Catalyzes the reversible NADPH linked reduction of 3-dehydroshikimate (DHSA) to yield shikimate (SA). The chain is Shikimate dehydrogenase (NADP(+)) from Psychrobacter arcticus (strain DSM 17307 / VKM B-2377 / 273-4).